We begin with the raw amino-acid sequence, 282 residues long: Homeobox-leucine zipper protein HAT1 (282 aa).

Positions 71–134 are disordered; sequence LEEETGVSSP…EEDYGGETCR (64 aa). Positions 76-89 are enriched in low complexity; it reads GVSSPNSTISSTVS. A DNA-binding region (homeobox) is located at residues 132 to 191; that stretch reads TCRKKLRLSKDQSAVLEDTFKEHNTLNPKQKLALAKKLGLTARQVEVWFQNRRARTKLKQ. The interval 199-220 is leucine-zipper; the sequence is LKRCVEKLTEENRRLEKEAAEL.

The protein belongs to the HD-ZIP homeobox family. Class II subfamily. Interacts with BZIP30.

Its subcellular location is the nucleus. Functionally, probable transcription factor. In Arabidopsis thaliana (Mouse-ear cress), this protein is Homeobox-leucine zipper protein HAT1 (HAT1).